A 425-amino-acid polypeptide reads, in one-letter code: L-lysine 2,3-aminomutase (425 aa).

One can recognise a Radical SAM core domain in the interval 113-325 (HRYPDRVLLL…GLRGHTSGYA (213 aa)). Residues Cys127, Cys131, and Cys134 each coordinate [4Fe-4S] cluster. Lys339 carries the post-translational modification N6-(pyridoxal phosphate)lysine.

It belongs to the radical SAM superfamily. KamA family. As to quaternary structure, homotetramer. [4Fe-4S] cluster serves as cofactor. Pyridoxal 5'-phosphate is required as a cofactor.

The enzyme catalyses L-lysine = (3S)-3,6-diaminohexanoate. It functions in the pathway amino-acid degradation; L-lysine degradation via acetate pathway. Catalyzes the interconversion of L-alpha-lysine and L-beta-lysine. This Fusobacterium nucleatum subsp. nucleatum (strain ATCC 25586 / DSM 15643 / BCRC 10681 / CIP 101130 / JCM 8532 / KCTC 2640 / LMG 13131 / VPI 4355) protein is L-lysine 2,3-aminomutase.